Reading from the N-terminus, the 89-residue chain is Small ribosomal subunit protein uS15 (89 aa).

It belongs to the universal ribosomal protein uS15 family. In terms of assembly, part of the 30S ribosomal subunit. Forms a bridge to the 50S subunit in the 70S ribosome, contacting the 23S rRNA.

In terms of biological role, one of the primary rRNA binding proteins, it binds directly to 16S rRNA where it helps nucleate assembly of the platform of the 30S subunit by binding and bridging several RNA helices of the 16S rRNA. Its function is as follows. Forms an intersubunit bridge (bridge B4) with the 23S rRNA of the 50S subunit in the ribosome. The chain is Small ribosomal subunit protein uS15 from Lysinibacillus sphaericus (strain C3-41).